The sequence spans 649 residues: MVAKKGRRDSSDSSPIVEVGEIDTSAPFQSVKDAVNLFGEAAFSAEKPVFRKPNPQSAEKVLVKQTELHLAQKELNKLKEQLKNAETIREQALSELEWSKRTVDELTRKLEAVNESRDSANKATEAAKSLIEEAKPGNVSVASSSDAQTRDMEEYGEVCKELDTAKQELRKIRQVSNEILETKTVALSKVEEAKKVSKVHSEKIELLRKEIAAVNESVEQTKLACSQARKEQSEIFAEKEIQQKSYKAGMEESAKKSLALKNEFDPEFAKKLEVQLTETYNEIDELQKQMETAKASDIDSVNGVSLELNEAKGLFEKLVEEEKSLQELVESLKAELKNVKMEHDEVEAKEAEIESVAGDLHLKLSRSKSELEQCVTEESKAKAALEDMMLTINQISSETEAARREAEGMRNKAKELMKEAESAHLALEDSELHLRVALDEAEEAKAAETKALEQIKSMSEKTNAARNSTSSESGSQSITLSQEEFKSLSKRAEVFDKLAEMKVAAALAQVEAVRASENETLKKLETTQEEIKKLKTATEEALKKAAMADAAKKAVEGELRRWRERDQKKAEEAATRILAEAEMKMASESSPQQHYKAPKQKPVNNKLEKTKTSVVSKKVLMPNLSGIFNRKKNQVEWGSPSYLPGEKPF.

Coiled-coil stretches lie at residues 59-227 (EKVL…ACSQ), 267-356 (EFAK…IESV), and 391-461 (TINQ…MSEK). Over residues 443-453 (EAKAAETKALE) the composition is skewed to basic and acidic residues. The segment at 443 to 483 (EAKAAETKALEQIKSMSEKTNAARNSTSSESGSQSITLSQE) is disordered. The segment covering 456–467 (KSMSEKTNAARN) has biased composition (polar residues). Residues 468-482 (STSSESGSQSITLSQ) are compositionally biased toward low complexity. Residues 505 to 549 (AALAQVEAVRASENETLKKLETTQEEIKKLKTATEEALKKAAMAD) are a coiled coil. The tract at residues 583–611 (MKMASESSPQQHYKAPKQKPVNNKLEKTK) is disordered.

The protein belongs to the WEB family.

This chain is WEB family protein At5g55860, found in Arabidopsis thaliana (Mouse-ear cress).